The following is a 613-amino-acid chain: 8-methylmenaquinol:fumarate reductase flavoprotein subunit (613 aa).

The tat-type signal signal peptide spans Met1–Ala33. FAD contacts are provided by residues Gly53–Gly58, Ser78–Gly93, and Asp255. Substrate-binding residues include His276 and Thr288. Arg319 serves as the catalytic Proton acceptor. His387 contacts substrate. Glu413 lines the FAD pocket. Arg424 serves as a coordination point for substrate. Residue Ser429–Leu430 coordinates FAD.

Belongs to the FAD-dependent oxidoreductase 2 family. FRD/SDH subfamily. The MFR complex is composed of three subunits: a flavoprotein (SdhA), an iron-sulfur protein (SdhB), and one hydrophobic anchor protein (SdhE). The cofactor is FAD. In terms of processing, predicted to be exported by the Tat system. The position of the signal peptide cleavage has not been experimentally proven.

Its subcellular location is the periplasm. The protein resides in the cell membrane. It catalyses the reaction 8-methylmenaquinone-6 + succinate = 8-methylmenaquinol-6 + fumarate. Its function is as follows. Flavoprotein subunit of 8-methylmenaquinol:fumarate reductase (MFR), that catalyzes the reduction of fumarate using 8-methylmenaquinol-6 as electron donor. The complex shows no succinate oxidation activity. Is involved in anaerobic metabolism. SdhA contains the dicarboxylate reduction site. In Wolinella succinogenes (strain ATCC 29543 / DSM 1740 / CCUG 13145 / JCM 31913 / LMG 7466 / NCTC 11488 / FDC 602W) (Vibrio succinogenes), this protein is 8-methylmenaquinol:fumarate reductase flavoprotein subunit.